Reading from the N-terminus, the 237-residue chain is Ribonuclease 3 (237 aa).

The region spanning 7-135 (IKEVEAKLKF…ILGAVYLDGG (129 aa)) is the RNase III domain. Glu-48 provides a ligand contact to Mg(2+). The active site involves Asp-52. Residues Asn-121 and Glu-124 each contribute to the Mg(2+) site. Residue Glu-124 is part of the active site. One can recognise a DRBM domain in the interval 160–229 (NPKNRLQQLT…AQEALDANDY (70 aa)).

This sequence belongs to the ribonuclease III family. As to quaternary structure, homodimer. Requires Mg(2+) as cofactor.

Its subcellular location is the cytoplasm. It catalyses the reaction Endonucleolytic cleavage to 5'-phosphomonoester.. Functionally, digests double-stranded RNA. Involved in the processing of primary rRNA transcript to yield the immediate precursors to the large and small rRNAs (23S and 16S). Processes some mRNAs, and tRNAs when they are encoded in the rRNA operon. Processes pre-crRNA and tracrRNA of type II CRISPR loci if present in the organism. The polypeptide is Ribonuclease 3 (Chlamydia felis (strain Fe/C-56) (Chlamydophila felis)).